The sequence spans 215 residues: Mite allergen Der p 7 (215 aa).

Positions 1–17 are cleaved as a signal peptide; the sequence is MMKLLLIAAAAFVAVSA. Asn-151 is a glycosylation site (N-linked (GlcNAc...) asparagine).

This sequence belongs to the mite group 7 allergen family.

The protein resides in the secreted. The chain is Mite allergen Der p 7 (DERP7) from Dermatophagoides pteronyssinus (European house dust mite).